Consider the following 507-residue polypeptide: ATP synthase subunit alpha, chloroplastic (507 aa).

170-177 (IGDRQTGK) provides a ligand contact to ATP.

The protein belongs to the ATPase alpha/beta chains family. As to quaternary structure, F-type ATPases have 2 components, CF(1) - the catalytic core - and CF(0) - the membrane proton channel. CF(1) has five subunits: alpha(3), beta(3), gamma(1), delta(1), epsilon(1). CF(0) has four main subunits: a, b, b' and c.

It localises to the plastid. The protein resides in the chloroplast thylakoid membrane. It carries out the reaction ATP + H2O + 4 H(+)(in) = ADP + phosphate + 5 H(+)(out). In terms of biological role, produces ATP from ADP in the presence of a proton gradient across the membrane. The alpha chain is a regulatory subunit. This Adiantum capillus-veneris (Maidenhair fern) protein is ATP synthase subunit alpha, chloroplastic.